Reading from the N-terminus, the 411-residue chain is Diels-Alderase ffsF (411 aa).

The first 17 residues, 1–17 (MTQIKLLLLSLAITAQS), serve as a signal peptide directing secretion.

This sequence belongs to the Diels-Alderase family.

It functions in the pathway mycotoxin biosynthesis. Diels-Alderase; part of the gene cluster that mediates the biosynthesis of the cytotoxic leucine-containing cytochalasans, including aspochalasin C, aspochalasin E, TMC-169, flavichalasine F, aspergillin PZ, aspochalasin M and flavichalasine G. The first step in the pathway is catalyzed by the hybrid PKS-NRPS ffsA that utilizes 8 units of malonyl-CoA to iteratively assemble the octaketide chain before addition of L-leucine by the C-terminal NRPS modules. Because ffsA lacks a designated enoylreductase (ER) domain, the required activity is provided the enoyl reductase fssC. The methyltransferase (MT) domain of ffsA catalyzes the alpha-methylation at C10 and C14 using S-adenosyl-L-methionine as the methyl-donating cosubstrate. Reduction by the hydrolyase ffsE, followed by dehydration and intra-molecular Diels-Alder cyclization by the Diels-Alderase ffsF then yield the required isoindolone-fused macrocycle. A number of oxidative steps catalyzed by the tailoring cytochrome P450 monooxygenase ffsD, the FAD-linked oxidoreductase ffsJ and the short-chain dehydrogenase/reductase ffsI, are further required to afford the final products. In Aspergillus flavipes, this protein is Diels-Alderase ffsF.